A 698-amino-acid chain; its full sequence is MOXD1 homolog 1 (698 aa).

The signal sequence occupies residues 1–20 (MSVQDVLWIVLTVQLSFGLA). Asn-36, Asn-140, and Asn-221 each carry an N-linked (GlcNAc...) asparagine glycan. Residues 54 to 174 (GLYWLKWWIN…DTFKVLWSIG (121 aa)) enclose the DOMON domain. The active site involves Tyr-232. Residues His-265 and His-266 each coordinate Cu cation. The cysteines at positions 272 and 309 are disulfide-linked. Positions 347, 425, and 427 each coordinate Cu cation. 2 disulfide bridges follow: Cys-403/Cys-516 and Cys-479/Cys-501. His-425 is an active-site residue. Asn-465 carries an N-linked (GlcNAc...) asparagine glycan. Met-500 serves as a coordination point for Cu cation. 2 N-linked (GlcNAc...) asparagine glycosylation sites follow: Asn-538 and Asn-561.

It belongs to the copper type II ascorbate-dependent monooxygenase family. Requires Cu(2+) as cofactor.

The protein resides in the secreted. The chain is MOXD1 homolog 1 from Drosophila melanogaster (Fruit fly).